The following is a 138-amino-acid chain: Large ribosomal subunit protein uL16 (138 aa).

The segment covering 1-17 has biased composition (basic residues); the sequence is MLQPKRTKFRKQHKGRN. The interval 1-22 is disordered; sequence MLQPKRTKFRKQHKGRNRGVAT.

This sequence belongs to the universal ribosomal protein uL16 family. In terms of assembly, part of the 50S ribosomal subunit.

In terms of biological role, binds 23S rRNA and is also seen to make contacts with the A and possibly P site tRNAs. This Acidithiobacillus ferrooxidans (strain ATCC 23270 / DSM 14882 / CIP 104768 / NCIMB 8455) (Ferrobacillus ferrooxidans (strain ATCC 23270)) protein is Large ribosomal subunit protein uL16.